The chain runs to 1189 residues: MSGTMPLPPHRPGGYNVVIITLDQHAAGPAARALPRLQHDFPDIHVSVHAAAEWSENPAKLAAAKAAVLGANIVVANLLFIDEHLQAILPEMTAVRDNLDAFVGMVADPQIVRLTKMGDLDMTKPASGPMALLKKLRGKSEPGAGSAEKQMSMLRTIPKMLKFIPGKAQDLRAWFLCMQYWLGGSEDNIESMVRYLVGRYADNRDWRGIKAAAPIDYPEVGLYHPDMPGRITTDPAKLPQPANPVATIGILMLRSYILAKDTAHYDAVIRELQAHGVAVLPAFAGGLDGRPAIEEFLHGKIDTLLSLSGFSLVGGPAYNDSDAAVETLKALDVPYVTAQPLEFQTLGQWRASGGGLGPVETTMLIALPEIDGATNPTVFAGRHDPAGCLTCARGCKPDPEAESHAMAPCPERIETLVDKVVRMAKLRRSKVAERKVGIVLYGFPPNAGAAGTAAYLSVFESLFNVMHAMKASGYQMGELPESVQELRDAVLCGPNTTHGQPAQIAARIPAAEFVARTKWLKDIEAAWGSTPGKHQTDGRDVFVLGRQFGNVFVGLQPVFGYEGDPMRLLFEKGFAPTHAFAAFYRWLREDFAADTLLHFGMHGALEFMPGKQAGMCESCWPDRLIGNLPNVYLYAANNPSEATLAKRRSNAVIVSHLTPPLAQSGLYKGLAEIKESLGRLRALPPDSPEREDLEALVREQAKGVNMDASDLSTLWEKLLETEGALITEGLHVVGRPMTAEARAEMLALMPENADRARADKLLQEEHEIAGLLHALDGRYVPPVPGGDLVRSPEILPTGRNIHAFDPFRMPTAFAIKDGAAQAARLLATHPTLPRSIALVLWGSDNIKSDGGPIGQALALMGARPRFDNYGRLAGAELIPLSELGRPRIDVVMTLSGIFRDLLPLQTKLLAEAAYLCASAENEPLAQNFIRANVLATMQDTGMDFETASLRVFSNAEGAYGSNVNTLVGSAGFGDEDELADAYEARKSFAYGRDGKSTKQVNLLQNVLSKVDLAYQNLESVELGVTTVDHYFDTLGGIARATKRAQGGKETPVYIGDQTRGAGTVRTLQDQIALETRARSLNPKFYEGLLKHGAEGVRQIEAQVTNTLGWSATTGQVEPWVYQRLSETFVLDDEMRERLASLNSAASSRMAQRLLEASDRNYWQPDPATLAALQAAADELEDRMEGVAAE.

It belongs to the Mg-chelatase subunit H family.

The enzyme catalyses protoporphyrin IX + Mg(2+) + ATP + H2O = Mg-protoporphyrin IX + ADP + phosphate + 3 H(+). Its pathway is porphyrin-containing compound metabolism; bacteriochlorophyll biosynthesis (light-independent). Functionally, involved in bacteriochlorophyll pigment biosynthesis; introduces a magnesium ion into protoporphyrin IX to yield Mg-protoroporphyrin IX. This is Magnesium-chelatase subunit H (bchH) from Rhodobacter capsulatus (strain ATCC BAA-309 / NBRC 16581 / SB1003).